A 285-amino-acid polypeptide reads, in one-letter code: tRNA-cytidine(32) 2-sulfurtransferase (285 aa).

The PP-loop motif signature appears at 49-54 (SGGKDS). [4Fe-4S] cluster is bound by residues Cys-124, Cys-127, and Cys-215.

It belongs to the TtcA family. As to quaternary structure, homodimer. Mg(2+) serves as cofactor. [4Fe-4S] cluster is required as a cofactor.

It is found in the cytoplasm. The catalysed reaction is cytidine(32) in tRNA + S-sulfanyl-L-cysteinyl-[cysteine desulfurase] + AH2 + ATP = 2-thiocytidine(32) in tRNA + L-cysteinyl-[cysteine desulfurase] + A + AMP + diphosphate + H(+). It functions in the pathway tRNA modification. Functionally, catalyzes the ATP-dependent 2-thiolation of cytidine in position 32 of tRNA, to form 2-thiocytidine (s(2)C32). The sulfur atoms are provided by the cysteine/cysteine desulfurase (IscS) system. The chain is tRNA-cytidine(32) 2-sulfurtransferase from Hahella chejuensis (strain KCTC 2396).